The chain runs to 387 residues: Galactokinase (387 aa).

33-36 serves as a coordination point for substrate; that stretch reads EHTD. Residues S67 and 123–129 contribute to the ATP site; that span reads GAGLSSS. Residues S129 and E161 each contribute to the Mg(2+) site. D173 serves as the catalytic Proton acceptor. Y223 is a substrate binding site.

This sequence belongs to the GHMP kinase family. GalK subfamily.

The protein resides in the cytoplasm. It catalyses the reaction alpha-D-galactose + ATP = alpha-D-galactose 1-phosphate + ADP + H(+). It functions in the pathway carbohydrate metabolism; galactose metabolism. Catalyzes the transfer of the gamma-phosphate of ATP to D-galactose to form alpha-D-galactose-1-phosphate (Gal-1-P). This Lacticaseibacillus casei (Lactobacillus casei) protein is Galactokinase.